A 556-amino-acid polypeptide reads, in one-letter code: 2-isopropylmalate synthase (556 aa).

A Pyruvate carboxyltransferase domain is found at 33 to 307 (PIWCSSDLRD…HPQLDFSDID (275 aa)). Asp42, His246, His248, and Asn282 together coordinate Mg(2+). Positions 439-556 (ATSPYVLASH…AVTQAEAKAA (118 aa)) are regulatory domain.

Belongs to the alpha-IPM synthase/homocitrate synthase family. LeuA type 2 subfamily. Homodimer. Mg(2+) is required as a cofactor.

It is found in the cytoplasm. It catalyses the reaction 3-methyl-2-oxobutanoate + acetyl-CoA + H2O = (2S)-2-isopropylmalate + CoA + H(+). Its pathway is amino-acid biosynthesis; L-leucine biosynthesis; L-leucine from 3-methyl-2-oxobutanoate: step 1/4. Functionally, catalyzes the condensation of the acetyl group of acetyl-CoA with 3-methyl-2-oxobutanoate (2-ketoisovalerate) to form 3-carboxy-3-hydroxy-4-methylpentanoate (2-isopropylmalate). This chain is 2-isopropylmalate synthase, found in Pseudomonas aeruginosa (strain ATCC 15692 / DSM 22644 / CIP 104116 / JCM 14847 / LMG 12228 / 1C / PRS 101 / PAO1).